We begin with the raw amino-acid sequence, 153 residues long: Aspartate carbamoyltransferase regulatory chain (153 aa).

Zn(2+)-binding residues include cysteine 109, cysteine 114, cysteine 138, and cysteine 141.

Belongs to the PyrI family. Contains catalytic and regulatory chains. It depends on Zn(2+) as a cofactor.

Its function is as follows. Involved in allosteric regulation of aspartate carbamoyltransferase. The sequence is that of Aspartate carbamoyltransferase regulatory chain from Shigella dysenteriae serotype 1 (strain Sd197).